A 296-amino-acid polypeptide reads, in one-letter code: Protein FAM110A (296 aa).

2 disordered regions span residues 61-97 and 117-192; these read NTRQEPVQPPLVRQPLFSPGPRGPVLTPSRRVLPCSG and PVSP…KSDL. Pro residues-rich tracts occupy residues 139 to 148 and 161 to 170; these read PATPPRPPPS and PASPARPYPS.

Belongs to the FAM110 family. May interact with CSPP1.

It is found in the cytoplasm. It localises to the cytoskeleton. The protein resides in the microtubule organizing center. The protein localises to the centrosome. Its subcellular location is the spindle pole. This chain is Protein FAM110A (Fam110a), found in Mus musculus (Mouse).